The primary structure comprises 270 residues: Probable septum site-determining protein MinC (270 aa).

A disordered region spans residues Asp105–Ala129. The span at Glu116–Ala129 shows a compositional bias: low complexity.

It belongs to the MinC family. In terms of assembly, interacts with MinD and FtsZ.

In terms of biological role, cell division inhibitor that blocks the formation of polar Z ring septums. Rapidly oscillates between the poles of the cell to destabilize FtsZ filaments that have formed before they mature into polar Z rings. Prevents FtsZ polymerization. The protein is Probable septum site-determining protein MinC of Burkholderia pseudomallei (strain 668).